A 46-amino-acid chain; its full sequence is Cytochrome b559 subunit beta (46 aa).

Residues 21 to 37 (WLALHTLGIPTVFFLGA) form a helical membrane-spanning segment. His-25 lines the heme pocket.

This sequence belongs to the PsbE/PsbF family. As to quaternary structure, heterodimer of an alpha subunit and a beta subunit. PSII is composed of 1 copy each of membrane proteins PsbA, PsbB, PsbC, PsbD, PsbE, PsbF, PsbH, PsbI, PsbJ, PsbK, PsbL, PsbM, PsbT, PsbX, PsbY, PsbZ, Psb30/Ycf12, peripheral proteins PsbO, CyanoQ (PsbQ), PsbU, PsbV and a large number of cofactors. It forms dimeric complexes. It depends on heme b as a cofactor.

The protein localises to the cellular thylakoid membrane. This b-type cytochrome is tightly associated with the reaction center of photosystem II (PSII). PSII is a light-driven water:plastoquinone oxidoreductase that uses light energy to abstract electrons from H(2)O, generating O(2) and a proton gradient subsequently used for ATP formation. It consists of a core antenna complex that captures photons, and an electron transfer chain that converts photonic excitation into a charge separation. The protein is Cytochrome b559 subunit beta of Synechococcus sp. (strain CC9605).